The sequence spans 324 residues: G patch domain-containing protein 4 (324 aa).

2 disordered regions span residues 1 to 30 (MSAS…GKGL) and 123 to 324 (LSGG…NKSE). The G-patch domain occupies 11–57 (GMKFAEEQMHKHGWKEGKGLGRRENGICEAIKVKVKCDHAGVGHNSA). The span at 14-30 (FAEEQMHKHGWKEGKGL) shows a compositional bias: basic and acidic residues. Positions 131-141 (KEPSSSESSDS) are enriched in low complexity. Residues 186–215 (SRLEEQEREFLAKYGKKEQKNKERDEKLER) are compositionally biased toward basic and acidic residues. The segment covering 244 to 253 (HKKKKKKRKR) has biased composition (basic residues). Over residues 254–270 (ADSERKEESQENGHEEE) the composition is skewed to basic and acidic residues. The segment covering 296-309 (PSTQEEQPTESSDF) has biased composition (polar residues). A compositionally biased stretch (basic residues) spans 312–324 (KPKKKKKKKNKSE).

This Xenopus laevis (African clawed frog) protein is G patch domain-containing protein 4 (gpatch4).